A 430-amino-acid polypeptide reads, in one-letter code: Bifunctional protein GlmU (430 aa).

The interval 1–227 is pyrophosphorylase; that stretch reads MISKTHTFVI…GEEATGINNR (227 aa). UDP-N-acetyl-alpha-D-glucosamine contacts are provided by residues Lys-25, Gln-74, 79–80, 104–106, Gly-140, Glu-154, Asn-168, and Asn-225; these read GT and YGD. Asp-106 contacts Mg(2+). Asn-225 provides a ligand contact to Mg(2+). The interval 228-248 is linker; that stretch reads NDLIKAEFYFQENKRKIFTDS. Positions 249-430 are N-acetyltransferase; sequence GVTLVAPETV…REKQVTKRIK (182 aa). UDP-N-acetyl-alpha-D-glucosamine contacts are provided by Arg-314 and Lys-332. His-344 serves as the catalytic Proton acceptor. UDP-N-acetyl-alpha-D-glucosamine is bound by residues Tyr-347 and Asn-358. Acetyl-CoA is bound by residues Ala-361, 367–368, Ala-404, and Arg-421; that span reads NY.

This sequence in the N-terminal section; belongs to the N-acetylglucosamine-1-phosphate uridyltransferase family. The protein in the C-terminal section; belongs to the transferase hexapeptide repeat family. As to quaternary structure, homotrimer. Mg(2+) is required as a cofactor.

It is found in the cytoplasm. The enzyme catalyses alpha-D-glucosamine 1-phosphate + acetyl-CoA = N-acetyl-alpha-D-glucosamine 1-phosphate + CoA + H(+). The catalysed reaction is N-acetyl-alpha-D-glucosamine 1-phosphate + UTP + H(+) = UDP-N-acetyl-alpha-D-glucosamine + diphosphate. The protein operates within nucleotide-sugar biosynthesis; UDP-N-acetyl-alpha-D-glucosamine biosynthesis; N-acetyl-alpha-D-glucosamine 1-phosphate from alpha-D-glucosamine 6-phosphate (route II): step 2/2. It participates in nucleotide-sugar biosynthesis; UDP-N-acetyl-alpha-D-glucosamine biosynthesis; UDP-N-acetyl-alpha-D-glucosamine from N-acetyl-alpha-D-glucosamine 1-phosphate: step 1/1. It functions in the pathway bacterial outer membrane biogenesis; LPS lipid A biosynthesis. Its function is as follows. Catalyzes the last two sequential reactions in the de novo biosynthetic pathway for UDP-N-acetylglucosamine (UDP-GlcNAc). The C-terminal domain catalyzes the transfer of acetyl group from acetyl coenzyme A to glucosamine-1-phosphate (GlcN-1-P) to produce N-acetylglucosamine-1-phosphate (GlcNAc-1-P), which is converted into UDP-GlcNAc by the transfer of uridine 5-monophosphate (from uridine 5-triphosphate), a reaction catalyzed by the N-terminal domain. In Wolbachia pipientis wMel, this protein is Bifunctional protein GlmU.